The primary structure comprises 361 residues: Peptide chain release factor 1 (361 aa).

Glutamine 237 is subject to N5-methylglutamine. Positions 283–296 are enriched in basic and acidic residues; it reads VEDEKRRSEEESTR. The interval 283–305 is disordered; it reads VEDEKRRSEEESTRRNLVSSGDR.

This sequence belongs to the prokaryotic/mitochondrial release factor family. In terms of processing, methylated by PrmC. Methylation increases the termination efficiency of RF1.

The protein localises to the cytoplasm. Functionally, peptide chain release factor 1 directs the termination of translation in response to the peptide chain termination codons UAG and UAA. In Shewanella woodyi (strain ATCC 51908 / MS32), this protein is Peptide chain release factor 1.